The following is a 168-amino-acid chain: Thiol peroxidase (168 aa).

In terms of domain architecture, Thioredoxin spans 19–168; that stretch reads PQAGSKAQAF…YDAALNVLKA (150 aa). Cys-61 functions as the Cysteine sulfenic acid (-SOH) intermediate in the catalytic mechanism. A disulfide bridge connects residues Cys-61 and Cys-95.

This sequence belongs to the peroxiredoxin family. Tpx subfamily. As to quaternary structure, homodimer.

It catalyses the reaction a hydroperoxide + [thioredoxin]-dithiol = an alcohol + [thioredoxin]-disulfide + H2O. Thiol-specific peroxidase that catalyzes the reduction of hydrogen peroxide and organic hydroperoxides to water and alcohols, respectively. Plays a role in cell protection against oxidative stress by detoxifying peroxides. This chain is Thiol peroxidase, found in Salmonella typhimurium (strain LT2 / SGSC1412 / ATCC 700720).